The primary structure comprises 366 residues: UPF0324 membrane protein RSc1111 (366 aa).

Helical transmembrane passes span 21–43, 103–125, 137–159, 169–191, 198–220, 240–262, 283–305, and 343–365; these read LAGA…TAWA, LGAS…GAWV, AVLV…APAV, AIAS…YALA, VAPA…VIAA, VLAL…LVLE, WFAA…ATWH, and AGVL…RWLA.

Belongs to the UPF0324 family.

It is found in the cell membrane. This chain is UPF0324 membrane protein RSc1111, found in Ralstonia nicotianae (strain ATCC BAA-1114 / GMI1000) (Ralstonia solanacearum).